Here is a 182-residue protein sequence, read N- to C-terminus: Neuropeptide CCHamide-1 (182 aa).

The N-terminal stretch at 1-22 (MWYSKCSWTLVVLVALFALVTG) is a signal peptide. An intrachain disulfide couples Cys-24 to Cys-31. At His-35 the chain carries Histidine amide. Positions 39–182 (SGGKAVIDAK…ENYSGYELTK (144 aa)) are excised as a propeptide. Disordered stretches follow at residues 67-103 (NNNNNNQNNQDDDNNDDDSNRNTNANSANNIPLAAPA) and 133-154 (QLQDQQQQGRGRGGQGQYDAAA). Residues 87–103 (RNTNANSANNIPLAAPA) show a composition bias toward low complexity. Asn-174 carries an N-linked (GlcNAc...) asparagine glycan.

Expressed in endocrine cells of the larval midgut (at protein level). In the brain, expressed in the optic lobes, lateral protocerebrum, subesophageal ganglion, and intermediate and superior medial protocerebrum (at protein level). Expressed in DN1a neurons but not in other clock neurons and expression follows a rhythmic pattern controlled by the circadian clock (at protein level). In the posterior midgut, expressed in enteroendocrine cells (at protein level). Low levels in larval brain with higher levels in larval and adult gut and adult brain.

It is found in the secreted. In terms of biological role, neuropeptide ligand for the CCHamide-1 receptor CCHa1-R. Neuromessenger mediating signaling between neuronal cells of the circadian clock network involved in regulation of sleep latency (the time required to fall asleep), amount of sleep and depth of sleep (arousability). Together with PDF, involved in regulating intensity and periodicity of daytime activity. In subsets of clock neurons modulates the rhythmic expression of PDP1 and PDF, and together with PDF modulates the rhythmic expression of circadian protein PER/period, but not TIM/timeless. Mediates signaling from DN1a (anterior dorsal neurons 1) clock neurons to s-LNv (small ventral lateral neurons) clock neurons through CCHa1-R, contributing to regulation of activity rhythms by the circadian clock, particularly in the morning. May be involved in signaling between clock neurons and non-clock neurons, such as the fan-shaped body, involved in sleep homeostasis. In response to a high protein diet mediates hormonal signaling between the gut and a CCHa1-R expressing subset of dopaminergic cells in the protocerebral anterior medial (PAM) cluster of the brain. This suppresses arousability by mechano-sensory stimulation (but not thermal stimulation) but is not involved in regulation of sleep patterns. This is Neuropeptide CCHamide-1 from Drosophila melanogaster (Fruit fly).